Reading from the N-terminus, the 519-residue chain is NADH-quinone oxidoreductase subunit C/D (519 aa).

Residues methionine 1–glutamine 138 form an NADH dehydrogenase I subunit C region. The tract at residues aspartate 159 to arginine 519 is NADH dehydrogenase I subunit D.

In the N-terminal section; belongs to the complex I 30 kDa subunit family. This sequence in the C-terminal section; belongs to the complex I 49 kDa subunit family. NDH-1 is composed of 13 different subunits. Subunits NuoB, CD, E, F, and G constitute the peripheral sector of the complex.

It is found in the cell inner membrane. The catalysed reaction is a quinone + NADH + 5 H(+)(in) = a quinol + NAD(+) + 4 H(+)(out). NDH-1 shuttles electrons from NADH, via FMN and iron-sulfur (Fe-S) centers, to quinones in the respiratory chain. The immediate electron acceptor for the enzyme in this species is believed to be a menaquinone. Couples the redox reaction to proton translocation (for every two electrons transferred, four hydrogen ions are translocated across the cytoplasmic membrane), and thus conserves the redox energy in a proton gradient. This chain is NADH-quinone oxidoreductase subunit C/D, found in Phocaeicola vulgatus (strain ATCC 8482 / DSM 1447 / JCM 5826 / CCUG 4940 / NBRC 14291 / NCTC 11154) (Bacteroides vulgatus).